The sequence spans 452 residues: tRNA modification GTPase MnmE (452 aa).

Positions 22, 80, and 119 each coordinate (6S)-5-formyl-5,6,7,8-tetrahydrofolate. The 163-residue stretch at 213–375 folds into the TrmE-type G domain; the sequence is GVRTVIVGKP…LENKIYEKFF (163 aa). Asn223 contacts K(+). GTP is bound by residues 223–228, 242–248, and 267–270; these read NSGKST, TDIPGTT, and DTAG. A Mg(2+)-binding site is contributed by Ser227. The K(+) site is built by Thr242, Ile244, and Thr247. Thr248 serves as a coordination point for Mg(2+). Lys452 is a (6S)-5-formyl-5,6,7,8-tetrahydrofolate binding site.

This sequence belongs to the TRAFAC class TrmE-Era-EngA-EngB-Septin-like GTPase superfamily. TrmE GTPase family. Homodimer. Heterotetramer of two MnmE and two MnmG subunits. It depends on K(+) as a cofactor.

It is found in the cytoplasm. Functionally, exhibits a very high intrinsic GTPase hydrolysis rate. Involved in the addition of a carboxymethylaminomethyl (cmnm) group at the wobble position (U34) of certain tRNAs, forming tRNA-cmnm(5)s(2)U34. This is tRNA modification GTPase MnmE from Petrotoga mobilis (strain DSM 10674 / SJ95).